The primary structure comprises 1159 residues: DNA-directed RNA polymerase subunit beta' (1159 aa).

Positions 398, 400, and 402 each coordinate Mg(2+). Zn(2+) is bound by residues Cys-741, Cys-815, Cys-822, and Cys-825.

The protein belongs to the RNA polymerase beta' chain family. As to quaternary structure, the RNAP catalytic core consists of 2 alpha, 1 beta, 1 beta' and 1 omega subunit. When a sigma factor is associated with the core the holoenzyme is formed, which can initiate transcription. The cofactor is Mg(2+). Zn(2+) is required as a cofactor.

The catalysed reaction is RNA(n) + a ribonucleoside 5'-triphosphate = RNA(n+1) + diphosphate. DNA-dependent RNA polymerase catalyzes the transcription of DNA into RNA using the four ribonucleoside triphosphates as substrates. This is DNA-directed RNA polymerase subunit beta' from Porphyromonas cangingivalis.